A 181-amino-acid polypeptide reads, in one-letter code: Large ribosomal subunit protein uL5 (181 aa).

The protein belongs to the universal ribosomal protein uL5 family. Part of the 50S ribosomal subunit; part of the 5S rRNA/L5/L18/L25 subcomplex. Contacts the 5S rRNA and the P site tRNA. Forms a bridge to the 30S subunit in the 70S ribosome.

Its function is as follows. This is one of the proteins that bind and probably mediate the attachment of the 5S RNA into the large ribosomal subunit, where it forms part of the central protuberance. In the 70S ribosome it contacts protein S13 of the 30S subunit (bridge B1b), connecting the 2 subunits; this bridge is implicated in subunit movement. Contacts the P site tRNA; the 5S rRNA and some of its associated proteins might help stabilize positioning of ribosome-bound tRNAs. In Nitrosococcus oceani (strain ATCC 19707 / BCRC 17464 / JCM 30415 / NCIMB 11848 / C-107), this protein is Large ribosomal subunit protein uL5.